The primary structure comprises 630 residues: PAN2-PAN3 deadenylation complex subunit PAN3 (630 aa).

A C3H1-type zinc finger spans residues 7 to 36 (SAKDTLCKNILIYGYCKFENKGCAFSHHKP). Disordered stretches follow at residues 38-72 (VGQP…PSFQ) and 135-171 (GFGS…QSSG). A compositionally biased stretch (low complexity) spans 44–56 (SASSSSGYSGNSS). The span at 140-149 (YPSSPNTSGA) shows a compositional bias: polar residues. The segment at 231–501 (QTLPRSNLPE…LDRFSQRYLT (271 aa)) is pseudokinase domain. Residues Arg-283, 333 to 340 (DYFPNSST), and 388 to 389 (TK) each bind ATP. Residues 502 to 540 (TRLFSTINNLEDSTDFMESQITTELENARLFRLLTKLNF) adopt a coiled-coil conformation. Residues 541-630 (IIDRPEAKDW…DSVFRNLTRD (90 aa)) are knob domain.

It belongs to the protein kinase superfamily. PAN3 family. As to quaternary structure, homodimer. Forms a heterotrimer with a catalytic subunit PAN2 to form the poly(A)-nuclease (PAN) deadenylation complex. Interacts (via PAM-2 motif) with poly(A)-binding protein PAB1 (via PABC domain), conferring substrate specificity of the enzyme complex.

The protein localises to the cytoplasm. In terms of biological role, regulatory subunit of the poly(A)-nuclease (PAN) deadenylation complex, one of two cytoplasmic mRNA deadenylases involved in mRNA turnover. PAN specifically shortens poly(A) tails of RNA and the activity is stimulated by poly(A)-binding protein PAB1. PAN deadenylation is followed by rapid degradation of the shortened mRNA tails by the CCR4-NOT complex. Deadenylated mRNAs are then degraded by two alternative mechanisms, namely exosome-mediated 3'-5' exonucleolytic degradation, or deadenylation-dependent mRNA decaping and subsequent 5'-3' exonucleolytic degradation by XRN1. May also be involved in post-transcriptional maturation of mRNA poly(A) tails. PAN3 acts as a positive regulator for PAN activity, recruiting the catalytic subunit PAN2 to mRNA via its interaction with RNA and with PAB1. The sequence is that of PAN2-PAN3 deadenylation complex subunit PAN3 from Scheffersomyces stipitis (strain ATCC 58785 / CBS 6054 / NBRC 10063 / NRRL Y-11545) (Yeast).